The chain runs to 68 residues: U2-agatoxin-Ao1u (68 aa).

The signal sequence occupies residues 1-20 (MKAIISLLLISAMVFSMIEA). A propeptide spanning residues 21–34 (VPLEEGLQLFEGER) is cleaved from the precursor. Cystine bridges form between Cys36–Cys52, Cys43–Cys57, and Cys51–Cys67.

This sequence belongs to the neurotoxin 01 (U2-agtx) family. In terms of tissue distribution, expressed by the venom gland.

It localises to the secreted. Insect active toxin causing rapid but reversible paralysis in crickets. No activity shown in mammals. Does not show effect on mammalian voltage-gated calcium channels. The chain is U2-agatoxin-Ao1u from Agelena orientalis (Funnel-web spider).